Here is a 559-residue protein sequence, read N- to C-terminus: Membrane protein insertase YidC (559 aa).

Residues 7–24 form a helical membrane-spanning segment; the sequence is ILWVIFSMSLVLLYDNWQ. 2 stretches are compositionally biased toward low complexity: residues 45–55 and 63–82; these read APAASGAAAQG and QPAT…QAAA. The interval 45 to 82 is disordered; it reads APAASGAAAQGDVPKANVQPATGTSAAPAAGAAPQAAA. Helical transmembrane passes span 338 to 358, 364 to 384, 434 to 454, 472 to 492, and 507 to 527; these read LELV…FWLL, FLGN…LVFF, LGGC…YWVL, LSVP…MFVQ, and VMMI…AGLV.

This sequence belongs to the OXA1/ALB3/YidC family. Type 1 subfamily. Interacts with the Sec translocase complex via SecD. Specifically interacts with transmembrane segments of nascent integral membrane proteins during membrane integration.

It localises to the cell inner membrane. In terms of biological role, required for the insertion and/or proper folding and/or complex formation of integral membrane proteins into the membrane. Involved in integration of membrane proteins that insert both dependently and independently of the Sec translocase complex, as well as at least some lipoproteins. Aids folding of multispanning membrane proteins. The chain is Membrane protein insertase YidC from Cupriavidus taiwanensis (strain DSM 17343 / BCRC 17206 / CCUG 44338 / CIP 107171 / LMG 19424 / R1) (Ralstonia taiwanensis (strain LMG 19424)).